The chain runs to 446 residues: Exodeoxyribonuclease 7 large subunit (446 aa).

Belongs to the XseA family. Heterooligomer composed of large and small subunits.

It is found in the cytoplasm. The catalysed reaction is Exonucleolytic cleavage in either 5'- to 3'- or 3'- to 5'-direction to yield nucleoside 5'-phosphates.. Bidirectionally degrades single-stranded DNA into large acid-insoluble oligonucleotides, which are then degraded further into small acid-soluble oligonucleotides. This is Exodeoxyribonuclease 7 large subunit from Geotalea uraniireducens (strain Rf4) (Geobacter uraniireducens).